The sequence spans 957 residues: Glycine dehydrogenase (decarboxylating) (957 aa).

Lys708 carries the post-translational modification N6-(pyridoxal phosphate)lysine.

Belongs to the GcvP family. In terms of assembly, the glycine cleavage system is composed of four proteins: P, T, L and H. The cofactor is pyridoxal 5'-phosphate.

The enzyme catalyses N(6)-[(R)-lipoyl]-L-lysyl-[glycine-cleavage complex H protein] + glycine + H(+) = N(6)-[(R)-S(8)-aminomethyldihydrolipoyl]-L-lysyl-[glycine-cleavage complex H protein] + CO2. In terms of biological role, the glycine cleavage system catalyzes the degradation of glycine. The P protein binds the alpha-amino group of glycine through its pyridoxal phosphate cofactor; CO(2) is released and the remaining methylamine moiety is then transferred to the lipoamide cofactor of the H protein. In Escherichia coli (strain ATCC 8739 / DSM 1576 / NBRC 3972 / NCIMB 8545 / WDCM 00012 / Crooks), this protein is Glycine dehydrogenase (decarboxylating).